Consider the following 428-residue polypeptide: Ribosome biogenesis protein WDR12 homolog (428 aa).

A ubiquitin-like (UBL) domain region spans residues 13–97 (LQVHFTTKQK…EDTIELEYVE (85 aa)). 7 WD repeats span residues 109–146 (LHDD…KLTI), 148–190 (GHVA…NTAE), 197–236 (GHER…DKGE), 259–297 (GHRE…IKTE), 299–338 (TGNK…GNFV), 344–384 (GHSQ…APIF), and 388–426 (GHED…DNTK).

It belongs to the WD repeat WDR12/YTM1 family.

It localises to the nucleus. Its subcellular location is the nucleolus. The protein localises to the nucleoplasm. Functionally, required for maturation of ribosomal RNAs and formation of the large ribosomal subunit. In Anopheles gambiae (African malaria mosquito), this protein is Ribosome biogenesis protein WDR12 homolog.